The chain runs to 137 residues: Glycine cleavage system H protein (137 aa).

The Lipoyl-binding domain maps to 36-118; it reads PAIIGITEYA…YGEGWLLKVE (83 aa). K77 is modified (N6-lipoyllysine).

It belongs to the GcvH family. In terms of assembly, the glycine cleavage system is composed of four proteins: P, T, L and H. (R)-lipoate is required as a cofactor.

Functionally, the glycine cleavage system catalyzes the degradation of glycine. The H protein shuttles the methylamine group of glycine from the P protein to the T protein. This Bifidobacterium longum (strain NCC 2705) protein is Glycine cleavage system H protein.